The primary structure comprises 392 residues: MAMLGTALRPSATRVMLLGSGELGKEVAIECQRLGIEVIAVDRYADAPAMQVAHRSHVINMLDGAALKKLVAQEMPDFIVPEIEAIATDALVELEQQGQRVVPTARAARLTMNREGIRRLAAEELGLPTSAYRFAENEAEFREAVAEIGLPCIVKPVMSSSGKGQSFIRSEEMLESAWQYAQQGGRAGAGKVIVEGVVKFDFEITLLTISAVDGVHFCAPIGHRQEDGDYRESWQPQQMSDVALTRAQEIAQKVVEALGGYGLFGVELFVCGDEVIFSEVSPRPHDTGMVTLISQDLSEFALHVRAFLGLPVGGIRQYGPAASAVILPTLKSDDVKFGELSGALGAGLQLRLFGKPEIDGSRRLGVALATGETVDDAIARAKASAAAVIVKG.

N(1)-(5-phospho-beta-D-ribosyl)glycinamide contacts are provided by residues 22 to 23 (EL) and Glu-82. ATP is bound by residues Arg-114, Lys-155, 160 to 165 (SSGKGQ), 195 to 198 (EGVV), and Glu-203. An ATP-grasp domain is found at 119 to 308 (RLAAEELGLP…EFALHVRAFL (190 aa)). Positions 267 and 279 each coordinate Mg(2+). Residues Asp-286, Lys-355, and 362-363 (RR) each bind N(1)-(5-phospho-beta-D-ribosyl)glycinamide.

The protein belongs to the PurK/PurT family. Homodimer.

It catalyses the reaction N(1)-(5-phospho-beta-D-ribosyl)glycinamide + formate + ATP = N(2)-formyl-N(1)-(5-phospho-beta-D-ribosyl)glycinamide + ADP + phosphate + H(+). Its pathway is purine metabolism; IMP biosynthesis via de novo pathway; N(2)-formyl-N(1)-(5-phospho-D-ribosyl)glycinamide from N(1)-(5-phospho-D-ribosyl)glycinamide (formate route): step 1/1. Involved in the de novo purine biosynthesis. Catalyzes the transfer of formate to 5-phospho-ribosyl-glycinamide (GAR), producing 5-phospho-ribosyl-N-formylglycinamide (FGAR). Formate is provided by PurU via hydrolysis of 10-formyl-tetrahydrofolate. This Cronobacter sakazakii (strain ATCC BAA-894) (Enterobacter sakazakii) protein is Formate-dependent phosphoribosylglycinamide formyltransferase.